An 88-amino-acid polypeptide reads, in one-letter code: Putative membrane protein insertion efficiency factor (88 aa).

A disordered region spans residues 67-88 (LNAGGYDPVPPKSDNHSKENKK). Basic and acidic residues predominate over residues 79–88 (SDNHSKENKK).

This sequence belongs to the UPF0161 family.

It localises to the cell inner membrane. Could be involved in insertion of integral membrane proteins into the membrane. In Actinobacillus succinogenes (strain ATCC 55618 / DSM 22257 / CCUG 43843 / 130Z), this protein is Putative membrane protein insertion efficiency factor.